Here is a 100-residue protein sequence, read N- to C-terminus: NADH-quinone oxidoreductase subunit K (100 aa).

The next 3 membrane-spanning stretches (helical) occupy residues 2-22 (IGLTHYLILASLVFVIGLVGI), 29-49 (IMLFFSSEILLNSANIALAAI), and 60-80 (IIAFFIVAIAASEVAVGLGLL).

It belongs to the complex I subunit 4L family. NDH-1 is composed of 14 different subunits. Subunits NuoA, H, J, K, L, M, N constitute the membrane sector of the complex.

The protein resides in the cell inner membrane. It carries out the reaction a quinone + NADH + 5 H(+)(in) = a quinol + NAD(+) + 4 H(+)(out). NDH-1 shuttles electrons from NADH, via FMN and iron-sulfur (Fe-S) centers, to quinones in the respiratory chain. The immediate electron acceptor for the enzyme in this species is believed to be ubiquinone. Couples the redox reaction to proton translocation (for every two electrons transferred, four hydrogen ions are translocated across the cytoplasmic membrane), and thus conserves the redox energy in a proton gradient. The protein is NADH-quinone oxidoreductase subunit K of Campylobacter concisus (strain 13826).